We begin with the raw amino-acid sequence, 442 residues long: Ribosome biogenesis protein NOP53 (442 aa).

Residues 242 to 264 (KPSSNTNLKKIEDKTPRQAQKSV) are disordered.

This sequence belongs to the NOP53 family.

Its subcellular location is the nucleus. It localises to the nucleolus. The protein localises to the nucleoplasm. Functionally, may play a role in ribosome biogenesis. In Arabidopsis thaliana (Mouse-ear cress), this protein is Ribosome biogenesis protein NOP53.